Consider the following 734-residue polypeptide: Mechanosensitive ion channel protein 10 (734 aa).

2 disordered regions span residues 1 to 75 (MAEQ…LTQR) and 115 to 136 (SFSRASPNNKSNRSVGSPAPVT). The segment covering 24 to 39 (EASRRSKEMASPESEK) has biased composition (basic and acidic residues). At Ser34 the chain carries Phosphoserine. 2 stretches are compositionally biased toward polar residues: residues 65-75 (PNQNNVGLTQR) and 117-129 (SRASPNNKSNRSV). Phosphoserine is present on residues Ser128 and Ser131. The next 6 membrane-spanning stretches (helical) occupy residues 164 to 184 (ISTLALIESAFFVVILSALVA), 196 to 216 (FWGLEVWKWCVLVMVIFSGML), 249 to 269 (SVQVFIWLCLILVAWILLFNH), 288 to 308 (LISILTGAFFWLVKTLLLKIL), 516 to 536 (LVTAILMVVTVVIWLLLLEVA), and 551 to 571 (LAFIIGSTCKNLFESIVFVFV).

Belongs to the MscS (TC 1.A.23) family. As to expression, detected in the root tip and throughout the vasculature of the root and leaf.

The protein resides in the cell membrane. In terms of biological role, mechanosensitive channel that opens in response to stretch forces in the membrane lipid bilayer. The protein is Mechanosensitive ion channel protein 10 (MSL10) of Arabidopsis thaliana (Mouse-ear cress).